Consider the following 471-residue polypeptide: 3-isopropylmalate dehydratase large subunit (471 aa).

[4Fe-4S] cluster-binding residues include Cys-347, Cys-407, and Cys-410.

The protein belongs to the aconitase/IPM isomerase family. LeuC type 1 subfamily. Heterodimer of LeuC and LeuD. It depends on [4Fe-4S] cluster as a cofactor.

The enzyme catalyses (2R,3S)-3-isopropylmalate = (2S)-2-isopropylmalate. It participates in amino-acid biosynthesis; L-leucine biosynthesis; L-leucine from 3-methyl-2-oxobutanoate: step 2/4. In terms of biological role, catalyzes the isomerization between 2-isopropylmalate and 3-isopropylmalate, via the formation of 2-isopropylmaleate. The sequence is that of 3-isopropylmalate dehydratase large subunit from Acaryochloris marina (strain MBIC 11017).